We begin with the raw amino-acid sequence, 181 residues long: Large ribosomal subunit protein bL17 (181 aa).

Positions 141 to 159 are enriched in low complexity; it reads KAASATAESAPVATANDAA. Positions 141 to 181 are disordered; the sequence is KAASATAESAPVATANDAAPAEEAEVQGVKDPAEDCEAKAD. Residues 171 to 181 are compositionally biased toward basic and acidic residues; sequence DPAEDCEAKAD.

It belongs to the bacterial ribosomal protein bL17 family. Part of the 50S ribosomal subunit. Contacts protein L32.

The chain is Large ribosomal subunit protein bL17 from Geotalea daltonii (strain DSM 22248 / JCM 15807 / FRC-32) (Geobacter daltonii).